A 285-amino-acid polypeptide reads, in one-letter code: MARCO-like protein (285 aa).

Positions 1 to 20 are cleaved as a signal peptide; it reads MRAFIFFLFMLLAMFSASST. N-linked (GlcNAc...) asparagine glycosylation occurs at Asn-24. Disordered regions lie at residues 47–77 and 91–285; these read NHLG…GQPG and GRAG…QGNL. Composition is skewed to polar residues over residues 57 to 67 and 105 to 114; these read KQGGSYTQGNP and SGKSNQKGNP. The span at 115-128 shows a compositional bias: low complexity; it reads ESSNKQENSGSSSQ. Positions 134–145 are enriched in polar residues; it reads ISTQQGNPGSSD. The span at 160 to 173 shows a compositional bias: low complexity; that stretch reads GSSSQQGKPGSSSQ. The segment covering 174–185 has biased composition (polar residues); the sequence is HGNLGSSTQKGN. A compositionally biased stretch (low complexity) spans 186-220; sequence LGSSSLQGHLGLSSHQGKPESSGQQGKPGSSSQQG. A compositionally biased stretch (polar residues) spans 221–285; sequence NLGTSGQQEK…PGSSSRQGNL (65 aa).

In Homo sapiens (Human), this protein is MARCO-like protein.